A 605-amino-acid chain; its full sequence is DNA primase (605 aa).

Residues 38–62 (CPFHDEKTPSFTVSEDKQICHCFGC) form a CHC2-type zinc finger. The Toprim domain occupies 260–341 (DEIVLLEGFM…NVFVIQLPSG (82 aa)). Mg(2+) contacts are provided by Glu-266, Asp-310, and Asp-312.

The protein belongs to the DnaG primase family. Monomer. Interacts with DnaB. Requires Zn(2+) as cofactor. The cofactor is Mg(2+).

The enzyme catalyses ssDNA + n NTP = ssDNA/pppN(pN)n-1 hybrid + (n-1) diphosphate.. RNA polymerase that catalyzes the synthesis of short RNA molecules used as primers for DNA polymerase during DNA replication. The chain is DNA primase from Staphylococcus aureus (strain MSSA476).